We begin with the raw amino-acid sequence, 418 residues long: STAM-binding protein-like A (418 aa).

The disordered stretch occupies residues 199 to 218 (PDVHGPPQASLSPQTPPAGA). The MPN domain occupies 251 to 382 (LFVPAELCQR…LTDYGMDDVG (132 aa)). Residues His329, His331, Asp342, His344, Cys384, His390, and His392 each coordinate Zn(2+). Positions 329–342 (HTHPTQTAFLSSVD) match the JAMM motif motif.

It belongs to the peptidase M67C family. Zn(2+) serves as cofactor.

In terms of biological role, zinc metalloprotease that specifically cleaves 'Lys-63'-linked polyubiquitin chains. Does not cleave 'Lys-48'-linked polyubiquitin chains. Functions at the endosome and is able to oppose the ubiquitin-dependent sorting of receptors to lysosomes. The chain is STAM-binding protein-like A (stambpa) from Danio rerio (Zebrafish).